The following is a 161-amino-acid chain: Allophycocyanin beta chain (161 aa).

Asn-71 carries the N4-methylasparagine modification. Cys-81 contacts (2R,3E)-phycocyanobilin.

It belongs to the phycobiliprotein family. In terms of assembly, heterodimer of an alpha and a beta chain. Contains one covalently linked phycocyanobilin chromophore.

It is found in the plastid. It localises to the cyanelle thylakoid membrane. In terms of biological role, light-harvesting photosynthetic bile pigment-protein from the phycobiliprotein complex. Allophycocyanin has a maximum absorption at approximately 650 nanometers. The protein is Allophycocyanin beta chain (apcB) of Cyanophora paradoxa.